Consider the following 200-residue polypeptide: MPRWEAAALLAAIVGVCVWSDDPGKVISDRYAVYWNRSNPRFHRGDYTVEVSINDYLDIYCPHYEEPLPAERMERYVLYMVNYEGHASCDHRQKGFKRWECNRPDSPSGPLKFSEKFQLFTPFSLGFEFRPGHEYYYISASPLNVVDRPCLKLKVYVRPTNDSLYESPEPIFTSNNSCCSLAVPRAVLVAAPVFWTLLGS.

An N-terminal signal peptide occupies residues 1–22 (MPRWEAAALLAAIVGVCVWSDD). The Ephrin RBD domain maps to 28–161 (SDRYAVYWNR…KLKVYVRPTN (134 aa)). N36 carries N-linked (GlcNAc...) asparagine glycosylation. Disulfide bonds link C61–C101 and C89–C150. N-linked (GlcNAc...) asparagine glycans are attached at residues N161 and N175. A lipid anchor (GPI-anchor amidated asparagine) is attached at N175. Residues 176 to 200 (NSCCSLAVPRAVLVAAPVFWTLLGS) constitute a propeptide, removed in mature form.

The protein belongs to the ephrin family. In terms of assembly, binds to the receptor tyrosine kinases EPHA3, EPHA4 and EPHA5. Interacts with EPHA8; activates EPHA8. Expressed in a gradient across the tectum being more strongly expressed at the posterior pole.

It localises to the cell membrane. Functionally, cell surface GPI-bound ligand for Eph receptors, a family of receptor tyrosine kinases which are crucial for migration, repulsion and adhesion during neuronal, vascular and epithelial development. Binds promiscuously Eph receptors residing on adjacent cells, leading to contact-dependent bidirectional signaling into neighboring cells. The signaling pathway downstream of the receptor is referred to as forward signaling while the signaling pathway downstream of the ephrin ligand is referred to as reverse signaling. With the EPHA2 receptor may play a role in bone remodeling through regulation of osteoclastogenesis and osteoblastogenesis. The sequence is that of Ephrin-A2 (EFNA2) from Gallus gallus (Chicken).